The following is a 170-amino-acid chain: Putative 4-hydroxy-4-methyl-2-oxoglutarate aldolase (170 aa).

Residues 85-88 (GDMI) and R107 contribute to the substrate site. An a divalent metal cation-binding site is contributed by D108.

It belongs to the class II aldolase/RraA-like family. In terms of assembly, homotrimer. A divalent metal cation serves as cofactor.

It catalyses the reaction 4-hydroxy-4-methyl-2-oxoglutarate = 2 pyruvate. The enzyme catalyses oxaloacetate + H(+) = pyruvate + CO2. Its function is as follows. Catalyzes the aldol cleavage of 4-hydroxy-4-methyl-2-oxoglutarate (HMG) into 2 molecules of pyruvate. Also contains a secondary oxaloacetate (OAA) decarboxylase activity due to the common pyruvate enolate transition state formed following C-C bond cleavage in the retro-aldol and decarboxylation reactions. This chain is Putative 4-hydroxy-4-methyl-2-oxoglutarate aldolase, found in Acinetobacter baylyi (strain ATCC 33305 / BD413 / ADP1).